A 534-amino-acid polypeptide reads, in one-letter code: Cytochrome c oxidase subunit 1 (534 aa).

Over 1–14 (MVQRWLYSTNAKDI) the chain is Mitochondrial matrix. Residues 15 to 39 (AVLYFMLAIFSGMAGTAMSLIIRLE) form a helical membrane-spanning segment. Ca(2+)-binding residues include glutamate 39, alanine 42, and glycine 44. The Mitochondrial intermembrane segment spans residues 40–54 (LAAPGSQYLHGNSQL). The chain crosses the membrane as a helical span at residues 55–88 (FNVLVVGHAVLMIFFLVMPALIGGFGNYLLPLMI). Fe(II)-heme a is bound at residue histidine 62. Residues 89–97 (GATDTAFPR) are Mitochondrial matrix-facing. A helical membrane pass occupies residues 98-118 (INNIAFWVLPMGLVCLVTSTL). Residues 119–142 (VESGAGTGWTVYPPLSSIQAHSGP) are Mitochondrial intermembrane-facing. A helical transmembrane segment spans residues 143–171 (SVDLAIFALHLTSISSLLGAINFIVTTLN). The Mitochondrial matrix segment spans residues 172-183 (MRTNGMTMHKLP). The helical transmembrane segment at 184-215 (LFVWSIFITAFLLLLSLPVLSAGITMLLLDRN) threads the bilayer. Over 216 to 228 (FNTSFFEVSGGGD) the chain is Mitochondrial intermembrane. The chain crosses the membrane as a helical span at residues 229–263 (PILYEHLFWFFGHPEVYILIIPGFGIISHVVSTYS). Histidine 241 is a Cu cation binding site. The segment at residues 241 to 245 (HPEVY) is a cross-link (1'-histidyl-3'-tyrosine (His-Tyr)). Tyrosine 245 is a binding site for O2. At 264–269 (KKPVFG) the chain is on the mitochondrial matrix side. A helical membrane pass occupies residues 270–295 (EISMVYAMASIGLLGFLVWSHHMYIV). 2 residues coordinate Cu cation: histidine 290 and histidine 291. Residues 296–298 (GLD) are Mitochondrial intermembrane-facing. The chain crosses the membrane as a helical span at residues 299–327 (ADTRAYFTSATMIIAIPTGIKIFSWLATI). Residues 328–335 (HGGSIRLA) lie on the Mitochondrial matrix side of the membrane. A helical membrane pass occupies residues 336 to 358 (TPMLYAIAFLFLFTMGGLTGVAL). Residues 359–370 (ANASLDVAFHDT) are Mitochondrial intermembrane-facing. Histidine 368 and aspartate 369 together coordinate Mg(2+). The chain crosses the membrane as a helical span at residues 371–400 (YYVVGHFHYVLSMGAIFSLFAGYYYWSPQI). A heme a3-binding site is contributed by histidine 376. Fe(II)-heme a is bound at residue histidine 378. Over 401–406 (LGLNYN) the chain is Mitochondrial matrix. A helical transmembrane segment spans residues 407-431 (EKLAQIQFWLIFIGANVIFFPMHFL). Residues 432-449 (GINGMPRRIPDYPDAFAG) lie on the Mitochondrial intermembrane side of the membrane. Residue proline 441 coordinates Ca(2+). Residues 450–474 (WNYVASIGSFIATLSLFLFIYILYD) traverse the membrane as a helical segment. Residues 475–534 (QLVNGLNNKVNNKSVIYNKAPDFVESNTIFNLNTVKSSSIEFLLTSPPAVHSFNTPAVQS) lie on the Mitochondrial matrix side of the membrane.

This sequence belongs to the heme-copper respiratory oxidase family. Component of the cytochrome c oxidase (complex IV, CIV), a multisubunit enzyme composed of 12 subunits. The complex is composed of a catalytic core of 3 subunits COX1, COX2 and COX3, encoded in the mitochondrial DNA, and 9 supernumerary subunits COX4, COX5A (or COX5B), COX6, COX7, COX8, COX9, COX12, COX13 and COX26, which are encoded in the nuclear genome. The complex exists as a monomer or a dimer and forms supercomplexes (SCs) in the inner mitochondrial membrane with a dimer of ubiquinol-cytochrome c oxidoreductase (cytochrome b-c1 complex, complex III, CIII), resulting in 2 different assemblies (supercomplexes III(2)IV and III(2)IV(2)). Requires heme as cofactor. It depends on Cu cation as a cofactor. The N-terminus is blocked.

It localises to the mitochondrion inner membrane. It catalyses the reaction 4 Fe(II)-[cytochrome c] + O2 + 8 H(+)(in) = 4 Fe(III)-[cytochrome c] + 2 H2O + 4 H(+)(out). It participates in energy metabolism; oxidative phosphorylation. In terms of biological role, component of the cytochrome c oxidase, the last enzyme in the mitochondrial electron transport chain which drives oxidative phosphorylation. The respiratory chain contains 3 multisubunit complexes succinate dehydrogenase (complex II, CII), ubiquinol-cytochrome c oxidoreductase (cytochrome b-c1 complex, complex III, CIII) and cytochrome c oxidase (complex IV, CIV), that cooperate to transfer electrons derived from NADH and succinate to molecular oxygen, creating an electrochemical gradient over the inner membrane that drives transmembrane transport and the ATP synthase. Cytochrome c oxidase is the component of the respiratory chain that catalyzes the reduction of oxygen to water. Electrons originating from reduced cytochrome c in the intermembrane space (IMS) are transferred via the dinuclear copper A center (CU(A)) of COX2 and heme A of COX1 to the active site in COX1, a binuclear center (BNC) formed by heme A3 and copper B (CU(B)). The BNC reduces molecular oxygen to 2 water molecules using 4 electrons from cytochrome c in the IMS and 4 protons from the mitochondrial matrix. COX1 is a catalytic core subunit containing heme A and the active site BNC with heme A3 and the copper atom CU(B). The protein is Cytochrome c oxidase subunit 1 (COX1) of Saccharomyces cerevisiae (strain ATCC 204508 / S288c) (Baker's yeast).